The chain runs to 248 residues: Tryptophan synthase alpha chain (248 aa).

Residues glutamate 36 and aspartate 47 each act as proton acceptor in the active site.

The protein belongs to the TrpA family. As to quaternary structure, tetramer of two alpha and two beta chains.

It carries out the reaction (1S,2R)-1-C-(indol-3-yl)glycerol 3-phosphate + L-serine = D-glyceraldehyde 3-phosphate + L-tryptophan + H2O. It functions in the pathway amino-acid biosynthesis; L-tryptophan biosynthesis; L-tryptophan from chorismate: step 5/5. Its function is as follows. The alpha subunit is responsible for the aldol cleavage of indoleglycerol phosphate to indole and glyceraldehyde 3-phosphate. The polypeptide is Tryptophan synthase alpha chain (Pyrococcus abyssi (strain GE5 / Orsay)).